The primary structure comprises 365 residues: DNA replication and repair protein RecF (365 aa).

An ATP-binding site is contributed by 30 to 37 (GRNAQGKT).

The protein belongs to the RecF family.

Its subcellular location is the cytoplasm. Functionally, the RecF protein is involved in DNA metabolism; it is required for DNA replication and normal SOS inducibility. RecF binds preferentially to single-stranded, linear DNA. It also seems to bind ATP. The protein is DNA replication and repair protein RecF of Streptococcus pneumoniae (strain CGSP14).